A 202-amino-acid chain; its full sequence is AFG2-interacting ribosome maturation factor (202 aa).

In terms of assembly, part of the 55LCC heterohexameric ATPase complex. Does not associate with pre-60S ribosomal particles.

The protein localises to the nucleus. The protein resides in the cytoplasm. Functionally, part of the 55LCC heterohexameric ATPase complex which is chromatin-associated and promotes replisome proteostasis to maintain replication fork progression and genome stability. Required for replication fork progression, sister chromatid cohesion, and chromosome stability. The ATPase activity is specifically enhanced by replication fork DNA and is coupled to cysteine protease-dependent cleavage of replisome substrates in response to replication fork damage. Uses ATPase activity to process replisome substrates in S-phase, facilitating their proteolytic turnover from chromatin to ensure DNA replication and mitotic fidelity. Involved in the cytoplasmic maturation steps of pre-60S ribosomal particles by promoting the release of shuttling protein RSL24D1/RLP24 from the pre-ribosomal particles. Plays an essential role in early embryonic development. The protein is AFG2-interacting ribosome maturation factor (airim) of Danio rerio (Zebrafish).